The primary structure comprises 135 residues: Photosystem II extrinsic protein V (135 aa).

Positions 37, 40, 41, and 92 each coordinate heme c.

Belongs to the cytochrome c family. PsbV subfamily. As to quaternary structure, PSII is composed of 1 copy each of membrane proteins PsbA, PsbB, PsbC, PsbD, PsbE, PsbF, PsbH, PsbI, PsbJ, PsbK, PsbL, PsbM, PsbT, PsbX, PsbY, PsbZ, Psb30/Ycf12, peripheral proteins PsbO, CyanoQ (PsbQ), PsbU, PsbV and a large number of cofactors. It forms dimeric complexes. Heme c is required as a cofactor.

The protein resides in the cellular thylakoid membrane. One of the extrinsic, lumenal subunits of photosystem II (PSII). PSII is a light-driven water plastoquinone oxidoreductase, using light energy to abstract electrons from H(2)O, generating a proton gradient subsequently used for ATP formation. The extrinsic proteins stabilize the structure of photosystem II oxygen-evolving complex (OEC), the ion environment of oxygen evolution and protect the OEC against heat-induced inactivation. Low-potential cytochrome c that plays a role in the OEC of PSII. In Microcystis aeruginosa, this protein is Photosystem II extrinsic protein V.